We begin with the raw amino-acid sequence, 183 residues long: Probable chemoreceptor glutamine deamidase CheD (183 aa).

It belongs to the CheD family.

The catalysed reaction is L-glutaminyl-[protein] + H2O = L-glutamyl-[protein] + NH4(+). Functionally, probably deamidates glutamine residues to glutamate on methyl-accepting chemotaxis receptors (MCPs), playing an important role in chemotaxis. The sequence is that of Probable chemoreceptor glutamine deamidase CheD from Zymomonas mobilis subsp. mobilis (strain ATCC 31821 / ZM4 / CP4).